A 62-amino-acid chain; its full sequence is Large ribosomal subunit protein uL30 (62 aa).

The protein belongs to the universal ribosomal protein uL30 family. As to quaternary structure, part of the 50S ribosomal subunit.

This chain is Large ribosomal subunit protein uL30, found in Dinoroseobacter shibae (strain DSM 16493 / NCIMB 14021 / DFL 12).